The primary structure comprises 268 residues: tRNA pseudouridine synthase A (268 aa).

D54 (nucleophile) is an active-site residue. Substrate is bound at residue Y112.

Belongs to the tRNA pseudouridine synthase TruA family. Homodimer.

It carries out the reaction uridine(38/39/40) in tRNA = pseudouridine(38/39/40) in tRNA. Functionally, formation of pseudouridine at positions 38, 39 and 40 in the anticodon stem and loop of transfer RNAs. The chain is tRNA pseudouridine synthase A from Bordetella petrii (strain ATCC BAA-461 / DSM 12804 / CCUG 43448).